The following is a 753-amino-acid chain: MYKSQYISGHREKFVRLDDTDSRVSMSSNATGMKKRSCFGLFNVTSRGGGKTKNTSKSFREGVKIGSEGLKTIGKSFTSGVTRAVFPEDLRVSEKKIFDPQDKTLLLWNRMFVISCILAVSVDPLFFYLPIVDNSKNCIGIDSKLAVTTTTLRTIIDVFYLTRMALQFRTAYIAPSSRVFGRGELVIDPAKIAERYLTRYFIVDFLAVLPLPQIAVWKFLHGSKGTDVLPTKQALLHIVITQYIPRFVRFIPLTSELKKTAGAFAEGAWAGAAYYLLWYMLASHITGAFWYMLSVERNDTCLRSACKVQPDPKVCVQILYCGSKLMSSRETDWIKSVPDLFKNNCSAKSDESKFNYGIYSQAVSSGIVSSTTFFSKFCYCLWWGLQNLSTLGQGLQTSTYPGEVLFSIAIAVAGLLLFALLIGNMQTYLQSLTVRLEEMRIKRRDSEQWMHHRSLPQNLRERVRRYDQYKWLETRGVDEENIVQSLPKDLRRDIKRHLCLNLVRRVPLFANMDERLLDAICERLKPSLYTESTYIVREGDPVNEMLFIIRGRLESVTTDGGRSGFFNRGLLKEGDFCGEELLTWALDPKAGSNLPSSTRTVKALTEVEAFALEAEELKFVASQFRRLHSRQVQQTFRFYSQQWRTWAACFIQAAWRRHLRRKIAELRRKEEEEEEMDYEDDEYYDDNMGGMVTRSDSSVGSSSTLRSTVFASRFAANALKGHKLRVTESSKSLMNLTKPSEPDFEALDTDDLN.

Residues 1–111 (MYKSQYISGH…DKTLLLWNRM (111 aa)) lie on the Cytoplasmic side of the membrane. Residues 112–132 (FVISCILAVSVDPLFFYLPIV) traverse the membrane as a helical segment. Residues 133 to 145 (DNSKNCIGIDSKL) lie on the Extracellular side of the membrane. A helical membrane pass occupies residues 146–166 (AVTTTTLRTIIDVFYLTRMAL). Residues 167-199 (QFRTAYIAPSSRVFGRGELVIDPAKIAERYLTR) lie on the Cytoplasmic side of the membrane. The helical transmembrane segment at 200 to 220 (YFIVDFLAVLPLPQIAVWKFL) threads the bilayer. At 221-233 (HGSKGTDVLPTKQ) the chain is on the extracellular side. A helical transmembrane segment spans residues 234–254 (ALLHIVITQYIPRFVRFIPLT). Over 255-274 (SELKKTAGAFAEGAWAGAAY) the chain is Cytoplasmic. The chain crosses the membrane as a helical span at residues 275-295 (YLLWYMLASHITGAFWYMLSV). Over 296 to 402 (ERNDTCLRSA…QGLQTSTYPG (107 aa)) the chain is Extracellular. A helical membrane pass occupies residues 403–423 (EVLFSIAIAVAGLLLFALLIG). Over 424 to 753 (NMQTYLQSLT…FEALDTDDLN (330 aa)) the chain is Cytoplasmic. Residues 508 to 638 (LFAN…TFRF) and glutamate 579 contribute to the a nucleoside 3',5'-cyclic phosphate site. A calmodulin-binding region spans residues 624 to 639 (FRRLHSRQVQQTFRFY). The region spanning 644-673 (RTWAACFIQAAWRRHLRRKIAELRRKEEEE) is the IQ domain. Residues 731–753 (KSLMNLTKPSEPDFEALDTDDLN) form a disordered region. Residues 742-753 (PDFEALDTDDLN) are compositionally biased toward acidic residues.

It belongs to the cyclic nucleotide-gated cation channel (TC 1.A.1.5) family. Homotetramer or heterotetramer.

The protein resides in the cell membrane. In terms of biological role, putative cyclic nucleotide-gated ion channel. This is Putative cyclic nucleotide-gated ion channel 8 (CNGC8) from Arabidopsis thaliana (Mouse-ear cress).